Consider the following 272-residue polypeptide: Eukaryotic translation initiation factor 4E homolog (272 aa).

A disordered region spans residues 249–272; sequence GKLNSGRKPSNTRGGFSSFGNKRY. Positions 255–272 are enriched in polar residues; it reads RKPSNTRGGFSSFGNKRY.

This sequence belongs to the eukaryotic initiation factor 4E family.

In terms of biological role, recognizes and binds the 7-methylguanosine-containing mRNA cap during an early step in the initiation of protein synthesis and facilitates ribosome binding by inducing the unwinding of the mRNAs secondary structures. This is Eukaryotic translation initiation factor 4E homolog from Acanthamoeba polyphaga mimivirus (APMV).